Here is a 145-residue protein sequence, read N- to C-terminus: Large-conductance mechanosensitive channel (145 aa).

The next 2 helical transmembrane spans lie at 30–50 (VAVVIGGAFTSIVNAFVAWLM) and 74–94 (GELVIAIINFLIIAFVIFLII).

It belongs to the MscL family. In terms of assembly, homopentamer.

The protein resides in the cell inner membrane. Functionally, channel that opens in response to stretch forces in the membrane lipid bilayer. May participate in the regulation of osmotic pressure changes within the cell. This is Large-conductance mechanosensitive channel from Synechocystis sp. (strain ATCC 27184 / PCC 6803 / Kazusa).